The chain runs to 190 residues: Remorin (190 aa).

Basic and acidic residues predominate over residues 1–12 (MAEEQKTSKVDV). 2 disordered regions span residues 1-45 (MAEE…VESK) and 50-69 (VEKP…SADR). Ser14 is subject to Phosphoserine. Position 58 is a phosphothreonine (Thr58). The stretch at 92 to 147 (EKSKAENRAQKKISDVHAWENSKKAAVEAQLRKIEEKLEKKKAQYGEKMKNKVAAI) forms a coiled coil.

This sequence belongs to the remorin family. May polymerize to form filamentous structures. Expressed in roots, leaves, stems, flowers and siliques, with a maximal expression in apical regions.

Exhibits a non sequence-specific DNA-binding activity. The chain is Remorin (DBP) from Arabidopsis thaliana (Mouse-ear cress).